Reading from the N-terminus, the 196-residue chain is ATP-dependent Clp protease proteolytic subunit (196 aa).

Residue Ser101 is the Nucleophile of the active site. His126 is an active-site residue.

It belongs to the peptidase S14 family. As to quaternary structure, component of the chloroplastic Clp protease core complex.

The protein localises to the plastid. Its subcellular location is the chloroplast stroma. The catalysed reaction is Hydrolysis of proteins to small peptides in the presence of ATP and magnesium. alpha-casein is the usual test substrate. In the absence of ATP, only oligopeptides shorter than five residues are hydrolyzed (such as succinyl-Leu-Tyr-|-NHMec, and Leu-Tyr-Leu-|-Tyr-Trp, in which cleavage of the -Tyr-|-Leu- and -Tyr-|-Trp bonds also occurs).. Functionally, cleaves peptides in various proteins in a process that requires ATP hydrolysis. Has a chymotrypsin-like activity. Plays a major role in the degradation of misfolded proteins. The sequence is that of ATP-dependent Clp protease proteolytic subunit from Atropa belladonna (Belladonna).